The sequence spans 64 residues: MRYDNVKPCPFCGCPSVTVKAISGYYRAKCNGCESRTGYGGSEKEALERWNKRTTGNNNGGVHV.

The cofactor is Ca(2+). Requires Mg(2+) as cofactor.

Inhibited by EDTA. Its function is as follows. Toxic component of a type I toxin-antitoxin (TA) system. Upon overexpression inhibits growth and reduces colony-forming units in both the presence and absence of the Rac prophage, cells become filamentous. Has deoxyribonuclease activity (probably endonucleolytic), does not digest RNA. Its toxic effects are neutralized by sRNA antitoxin RalA, which is encoded in trans on the opposite DNA strand. Has RAL-like activity. The chain is Endodeoxyribonuclease toxin RalR (ralR) from Escherichia coli (strain K12).